Reading from the N-terminus, the 294-residue chain is Protoheme IX farnesyltransferase (294 aa).

The next 9 helical transmembrane spans lie at 22–42 (VTQLAVFCAVIGMFLATPELP), 46–66 (IVVAATIGIWLLAGAAFAINC), 89–109 (ITVPQTLVFSGLIGGAGMWVL), 116–136 (LTMWLTFATFVGYAVIYTIIL), 143–163 (NIVIGGLSGAMPPALGWAAVA), 170–190 (AWILVLIIFIWTPPHFWALAL), 212–232 (FTQFHIWLYTIALVATTMLPF), 234–254 (VGMSGLIYLVSVAILDIIFVW), and 272–292 (FAYSIIYLSLLFAALLVDHYL).

This sequence belongs to the UbiA prenyltransferase family. Protoheme IX farnesyltransferase subfamily.

It is found in the cell inner membrane. The catalysed reaction is heme b + (2E,6E)-farnesyl diphosphate + H2O = Fe(II)-heme o + diphosphate. It participates in porphyrin-containing compound metabolism; heme O biosynthesis; heme O from protoheme: step 1/1. Its function is as follows. Converts heme B (protoheme IX) to heme O by substitution of the vinyl group on carbon 2 of heme B porphyrin ring with a hydroxyethyl farnesyl side group. This Janthinobacterium sp. (strain Marseille) (Minibacterium massiliensis) protein is Protoheme IX farnesyltransferase.